A 353-amino-acid chain; its full sequence is Phosphoribosylformylglycinamidine cyclo-ligase (353 aa).

The protein belongs to the AIR synthase family.

It is found in the cytoplasm. It carries out the reaction 2-formamido-N(1)-(5-O-phospho-beta-D-ribosyl)acetamidine + ATP = 5-amino-1-(5-phospho-beta-D-ribosyl)imidazole + ADP + phosphate + H(+). The protein operates within purine metabolism; IMP biosynthesis via de novo pathway; 5-amino-1-(5-phospho-D-ribosyl)imidazole from N(2)-formyl-N(1)-(5-phospho-D-ribosyl)glycinamide: step 2/2. The protein is Phosphoribosylformylglycinamidine cyclo-ligase of Magnetococcus marinus (strain ATCC BAA-1437 / JCM 17883 / MC-1).